Here is a 376-residue protein sequence, read N- to C-terminus: DNA repair protein RAD51 homolog 3 (376 aa).

The tract at residues 1-126 (MRGKTFRFEM…LMKTTEICGA (126 aa)) is required for Holliday junction resolution activity. Ser20 bears the Phosphoserine mark. The interval 79–136 (SESHKKCTALELLEQEHTQGFIITFCSALDDILGGGVPLMKTTEICGAPGVGKTQLCM) is interaction with RAD51B, RAD51D and XRCC3. 125–132 (GAPGVGKT) is an ATP binding site. Residues 366–370 (RKRSR) carry the Nuclear localization signal motif.

This sequence belongs to the RecA family. RAD51 subfamily. As to quaternary structure, part of the RAD51 paralog protein complexes BCDX2 and CX3; the complexes have a ring-like structure arranged into a flat disc around a central channel. The BCDX2 complex consits of RAD51B, RAD51C, RAD51D and XRCC2; the CX3 complex consists of RAD51C and XRCC3. The BCDX2 subcomplex RAD51B:RAD51C interacts with RAD51. Interacts with SWSAP1; involved in homologous recombination repair. Interacts directly with PALB2 which may serve as a scaffold for a HR complex containing PALB2, BRCA2, RAD51C, RAD51 and XRCC3. Interacts with HELQ. Interacts with DNA damage up-regulated protein DDUP. Expressed in a variety of tissues, with highest expression in testis, heart muscle, spleen and prostate.

The protein resides in the nucleus. It localises to the cytoplasm. The protein localises to the perinuclear region. Its subcellular location is the mitochondrion. Its function is as follows. Essential for the homologous recombination (HR) pathway of DNA repair. Involved in the homologous recombination repair (HRR) pathway of double-stranded DNA breaks arising during DNA replication or induced by DNA-damaging agents. Part of the RAD51 paralog protein complexes BCDX2 and CX3 which act at different stages of the BRCA1-BRCA2-dependent HR pathway. Upon DNA damage, BCDX2 seems to act downstream of BRCA2 recruitment and upstream of RAD51 recruitment; CX3 seems to act downstream of RAD51 recruitment; both complexes bind predominantly to the intersection of the four duplex arms of the Holliday junction (HJ) and to junction of replication forks. The BCDX2 complex was originally reported to bind single-stranded DNA, single-stranded gaps in duplex DNA and specifically to nicks in duplex DNA. The BCDX2 subcomplex RAD51B:RAD51C exhibits single-stranded DNA-dependent ATPase activity suggesting an involvement in early stages of the HR pathway. Involved in RAD51 foci formation in response to DNA damage suggesting an involvement in early stages of HR probably in the invasion step. Has an early function in DNA repair in facilitating phosphorylation of the checkpoint kinase CHEK2 and thereby transduction of the damage signal, leading to cell cycle arrest and HR activation. Participates in branch migration and HJ resolution and thus is important for processing HR intermediates late in the DNA repair process; the function may be linked to the CX3 complex. Part of a PALB2-scaffolded HR complex containing BRCA2 and which is thought to play a role in DNA repair by HR. Protects RAD51 from ubiquitin-mediated degradation that is enhanced following DNA damage. Plays a role in regulating mitochondrial DNA copy number under conditions of oxidative stress in the presence of RAD51 and XRCC3. Contributes to DNA cross-link resistance, sister chromatid cohesion and genomic stability. Involved in maintaining centrosome number in mitosis. This chain is DNA repair protein RAD51 homolog 3 (RAD51C), found in Homo sapiens (Human).